Consider the following 1040-residue polypeptide: MGEEGGSASHDEEERASVLLGHSPGCEMCSQEAFQAQRSQLVELLVSGSLEGFESVLDWLLSWEVLSWEDYEGFHLLGQPLSHLARRLLDTVWNKGTWACQKLIAAAQEAQADSQSPKLHGCWDPHSLHPARDLQSHRPAIVRRLHSHVENMLDLAWERGFVSQYECDEIRLPIFTPSQRARRLLDLATVKANGLAAFLLQHVQELPVPLALPLEAATCKKYMAKLRTTVSAQSRFLSTYDGAETLCLEDIYTENVLEVWADVGMAGPPQKSPATLGLEELFSTPGHLNDDADTVLVVGEAGSGKSTLLQRLHLLWAAGQDFQEFLFVFPFSCRQLQCMAKPLSVRTLLFEHCCWPDVGQEDIFQLLLDHPDRVLLTFDGFDEFKFRFTDRERHCSPTDPTSVQTLLFNLLQGNLLKNARKVVTSRPAAVSAFLRKYIRTEFNLKGFSEQGIELYLRKRHHEPGVADRLIRLLQETSALHGLCHLPVFSWMVSKCHQELLLQEGGSPKTTTDMYLLILQHFLLHATPPDSASQGLGPSLLRGRLPTLLHLGRLALWGLGMCCYVFSAQQLQAAQVSPDDISLGFLVRAKGVVPGSTAPLEFLHITFQCFFAAFYLALSADVPPALLRHLFNCGRPGNSPMARLLPTMCIQASEGKDSSVAALLQKAEPHNLQITAAFLAGLLSREHWGLLAECQTSEKALLRRQACARWCLARSLRKHFHSIPPAAPGEAKSVHAMPGFIWLIRSLYEMQEERLARKAARGLNVGHLKLTFCSVGPTECAALAFVLQHLRRPVALQLDYNSVGDIGVEQLLPCLGVCKALYLRDNNISDRGICKLIECALHCEQLQKLALFNNKLTDGCAHSMAKLLACRQNFLALRLGNNYITAAGAQVLAEGLRGNTSLQFLGFWGNRVGDEGAQALAEALGDHQSLRWLSLVGNNIGSVGAQALALMLAKNVMLEELCLEENHLQDEGVCSLAEGLKKNSSLKILKLSNNCITYLGAEALLQALERNDTILEVWLRGNTFSLEEVDKLGCRDTRLLL.

2 CARD domains span residues 26 to 122 and 126 to 218; these read CEMC…LHGC and HSLH…EAAT. The ATG16L1-binding motif signature appears at 63–77; that stretch reads WEVLSWEDYEGFHLL. Positions 239, 252, 253, 302, 303, 304, 305, 306, and 307 each coordinate ADP. The segment at 241–274 is required for CARD9 binding; the sequence is DGAETLCLEDIYTENVLEVWADVGMAGPPQKSPA. The NACHT domain maps to 293 to 618; that stretch reads DTVLVVGEAG…FFAAFYLALS (326 aa). 299 to 306 contacts ATP; it reads GEAGSGKS. Cysteine 395 carries S-palmitoyl cysteine lipidation. Position 603 (histidine 603) interacts with ADP. LRR repeat units follow at residues 791–812, 816–839, 844–865, 872–884, 900–920, 928–949, 956–976, 984–1005, and 1012–1032; these read RPVALQLDYNSVGDIGVEQLLP, VCKALYLRDNNISDRGICKLIECA, QLQKLALFNNKLTDGCAHSMAK, NFLALRLGNNYIT, SLQFLGFWGNRVGDEGAQALA, SLRWLSLVGNNIGSVGAQALAL, MLEELCLEENHLQDEGVCSLA, SLKILKLSNNCITYLGAEALLQ, and TILEVWLRGNTFSLEEVDKLG. The S-palmitoyl cysteine moiety is linked to residue cysteine 1033.

Belongs to the NOD1-NOD2 family. As to quaternary structure, homooligomer: homooligomerizes following muramyl dipeptide (MDP)-binding, promoting RIPK2 recruitment. Interacts (via CARD domain) with RIPK2 (via CARD domain). Following RIPK2 recruitment, RIPK2 homooligomerizes via its CARD domain and forms long filaments named RIPosomes. Interacts (via CARD domain) with ubiquitin; inhibiting interaction with RIPK2. Component of a signaling complex consisting of ARHGEF2, NOD2 and RIPK2. Interacts with ANKRD17 (via N-terminus). Interacts with HSPA1A; the interaction enhances NOD2 stability. Interacts (via both CARD domains) with HSP90; the interaction enhances NOD2 stability. Interacts (via CARD domain) with SOCS3; the interaction promotes NOD2 degradation. Interacts (via CARD domain) with ERBIN; the interaction inhibits activation of NOD2. Interacts with MAPKBP1; the interaction is enhanced in the presence of muramyl dipeptide (MDP) and inhibits NOD2 homooligomerization and activation. Interacts with INAVA; the interaction takes place upon Pattern recognition receptor (PRR) stimulation. Interacts (via NACHT domain) with CARD9. Interacts (via CARD domain) with CASP1; this interaction leads to IL1B processing. Also interacts with CASP4. Interacts with NLRP1; this interaction is enhanced in the presence of muramyl dipeptide (MDP) and leads to increased IL1B release. Interacts with NLRP12; this interaction promotes degradation of NOD2 through the ubiquitin-proteasome pathway. Interacts with ANKHD1, C10orf67, CHMP5, DOCK7, ENTR1, KRT15, LDOC1, PPP1R12C, PPP2R3B, TRIM41 and VIM. Interacts with MAVS; interaction takes place following single-stranded RNA (ssRNA)-binding. Interacts with ATG16L1. Interacts with IRGM; promoting IRGM 'Lys-63'-linked polyubiquitination, which is required for interactions with the core autophagy factors. Palmitoylated by ZDHHC5; palmitoylation is required for proper recruitment to the bacterial entry site and hence for proper signaling upon cognate peptidoglycan detection. Palmitoylation promotes localization to the cell membrane. Palmitoylation protects from SQSTM1/p62-dependent autophagic degradation. Post-translationally, polyubiquitinated by TRIM27, leading to proteasome-mediated degradation. Polyubiquitinated and degraded following muramyl dipeptide (MDP) stimulation, conferring MDP tolerance and preventing septic shock. In terms of processing, degraded via selective autophagy following interaction with IRGM. IRGM promotes NOD2-RIPK2 RIPosome recruitment to autophagosome membranes, promoting their SQSTM1/p62-dependent autophagic degradation. O-glycosylated by OGT, O-GlcNAcylation increases protein stability. Expressed in monocytes, macrophages, dendritic cells, hepatocytes, preadipocytes, epithelial cells of oral cavity, lung and intestine, with higher expression in ileal Paneth cells and in intestinal stem cells. As to expression, expressed at higher level in leukocytes.

The protein localises to the cell membrane. It is found in the basolateral cell membrane. Its subcellular location is the cytoplasm. It localises to the mitochondrion. Its activity is regulated as follows. ADP-binding promotes an inactive closed conformation. In terms of biological role, pattern recognition receptor (PRR) that detects bacterial peptidoglycan fragments and other danger signals and plays an important role in gastrointestinal immunity. Specifically activated by muramyl dipeptide (MDP), a fragment of bacterial peptidoglycan found in every bacterial peptidoglycan type. NOD2 specifically recognizes and binds 6-O-phospho-MDP, the phosphorylated form of MDP, which is generated by NAGK. 6-O-phospho-MDP-binding triggers oligomerization that facilitates the binding and subsequent activation of the proximal adapter receptor-interacting RIPK2. Following recruitment, RIPK2 undergoes 'Met-1'- (linear) and 'Lys-63'-linked polyubiquitination by E3 ubiquitin-protein ligases XIAP, BIRC2, BIRC3 and the LUBAC complex, becoming a scaffolding protein for downstream effectors, triggering activation of the NF-kappa-B and MAP kinases signaling. This in turn leads to the transcriptional activation of hundreds of genes involved in immune response. Its ability to detect bacterial MDP plays a central role in maintaining the equilibrium between intestinal microbiota and host immune responses to control inflammation. An imbalance in this relationship results in dysbiosis, whereby pathogenic bacteria prevail on commensals, causing damage in the intestinal epithelial barrier as well as allowing bacterial invasion and inflammation. Acts as a regulator of appetite by sensing MDP in a subset of brain neurons: microbiota-derived MDP reach the brain, where they bind and activate NOD2 in inhibitory hypothalamic neurons, decreasing neuronal activity, thereby regulating satiety and body temperature. NOD2-dependent MDP-sensing of bacterial cell walls in the intestinal epithelial compartment contributes to sustained postnatal growth upon undernutrition. Also plays a role in antiviral response by acting as a sensor of single-stranded RNA (ssRNA) from viruses: upon ssRNA-binding, interacts with MAVS, leading to activation of interferon regulatory factor-3/IRF3 and expression of type I interferon. Also acts as a regulator of autophagy in dendritic cells via its interaction with ATG16L1, possibly by recruiting ATG16L1 at the site of bacterial entry. NOD2 activation in the small intestine crypt also contributes to intestinal stem cells survival and function: acts by promoting mitophagy via its association with ATG16L1. In addition to its main role in innate immunity, also regulates the adaptive immune system by acting as regulator of helper T-cell and regulatory T-cells (Tregs). Besides recognizing pathogens, also involved in the endoplasmic reticulum stress response: acts by sensing and binding to the cytosolic metabolite sphingosine-1-phosphate generated in response to endoplasmic reticulum stress, initiating an inflammation process that leads to activation of the NF-kappa-B and MAP kinases signaling. May also be involved in NLRP1 activation following activation by MDP, leading to CASP1 activation and IL1B release in macrophages. Its function is as follows. Acts as a pattern recognition receptor (PRR); able to activate NF-kappa-B. Functionally, can activate NF-kappa-B in a muramyl dipeptide (MDP)-independent manner. This Homo sapiens (Human) protein is Nucleotide-binding oligomerization domain-containing protein 2.